A 1387-amino-acid chain; its full sequence is DNA-directed RNA polymerase subunit beta'' (1387 aa).

Zn(2+) is bound by residues cysteine 220, cysteine 291, cysteine 298, and cysteine 301.

It belongs to the RNA polymerase beta' chain family. RpoC2 subfamily. In terms of assembly, in plastids the minimal PEP RNA polymerase catalytic core is composed of four subunits: alpha, beta, beta', and beta''. When a (nuclear-encoded) sigma factor is associated with the core the holoenzyme is formed, which can initiate transcription. It depends on Zn(2+) as a cofactor.

It localises to the plastid. Its subcellular location is the chloroplast. The enzyme catalyses RNA(n) + a ribonucleoside 5'-triphosphate = RNA(n+1) + diphosphate. Its function is as follows. DNA-dependent RNA polymerase catalyzes the transcription of DNA into RNA using the four ribonucleoside triphosphates as substrates. In Carica papaya (Papaya), this protein is DNA-directed RNA polymerase subunit beta''.